Here is a 250-residue protein sequence, read N- to C-terminus: MLSVPEMILYEDRVNSFGGWSKQLRPNKDTLAPAGFFYTGMGDKVKCFACGLEVIDWDPTDNPWTEHGKFSGDCLYLKMTGAIVKSKDATTTNPSTSNPFTGANNQQAVIPLTAPPPLFQQPPPPTTTSAPAVDVAPAPPTFGFNTTSTSKTTNYAFPARATAPPPITSVPKPMFGNGFVFNSSPNKQTALFGKPPGNGQDVCGNMPSTTNNSNKQQGVFGINMTGGTNQQQPTSGMFGVKPVVAQPFKF.

One copy of the BIR repeat lies at 13-78 (RVNSFGGWSK…KFSGDCLYLK (66 aa)).

Its function is as follows. May act as an apoptosis inhibitor. The chain is Putative apoptosis inhibitor ORF99 from Ostreid herpesvirus 1 (isolate France) (OsHV-1).